Here is a 155-residue protein sequence, read N- to C-terminus: MRCPKCDHNGTRVLDSRPVQDHYSIRRRRECEKCGYRFTTFETVEQTPLIIVKKDGNREEFSREKVLRGIIRACEKRPVTLEQLEGVVTKVEQQLRALAQSEIPSEQVGELVMNELARVDEVAYVRFASVYRQFKDITVFFKELEDLMKQENSTN.

A zinc finger spans residues 3–34 (CPKCDHNGTRVLDSRPVQDHYSIRRRRECEKC). The region spanning 49–139 (LIIVKKDGNR…VYRQFKDITV (91 aa)) is the ATP-cone domain.

The protein belongs to the NrdR family. Zn(2+) serves as cofactor.

Functionally, negatively regulates transcription of bacterial ribonucleotide reductase nrd genes and operons by binding to NrdR-boxes. This Exiguobacterium sp. (strain ATCC BAA-1283 / AT1b) protein is Transcriptional repressor NrdR.